We begin with the raw amino-acid sequence, 220 residues long: Inner kinetochore subunit fta3 (220 aa).

The protein belongs to the CENP-H/MCM16 family. In terms of assembly, component of the inner kinetochore constitutive centromere-associated network (CCAN) (also known as central kinetochore Sim4 complex in fission yeast), which is composed of at least cnl2, cnp3, cnp20, fta1, fta2, fta3, fta4, fta6, fta7, mal2, mhf1, mhf2, mis6, mis15, mis17, sim4 and wip1.

Its subcellular location is the nucleus. The protein resides in the chromosome. It is found in the centromere. The protein localises to the kinetochore. Component of the kinetochore, a multiprotein complex that assembles on centromeric DNA and attaches chromosomes to spindle microtubules, mediating chromosome segregation and sister chromatid segregation during meiosis and mitosis. Component of the inner kinetochore constitutive centromere-associated network (CCAN), which serves as a structural platform for outer kinetochore assembly. Fta2, fta3 and fta4 associate with the central core (cnt) and inner repeat (inr) region of the centromere. The sequence is that of Inner kinetochore subunit fta3 (fta3) from Schizosaccharomyces pombe (strain 972 / ATCC 24843) (Fission yeast).